The primary structure comprises 300 residues: MKIFAILGASASGKSALGLRLAKELECFILSLDSLSIYQEINIASAKPSKEELLSIRHFGIDLLTPNEPSNAALFAHLFEEALEASNQAGKKALLLVGGTGFFLKRIIEGLSPAPTLDPSAKEWLKEVLENRREAFKELEKIDPLYTSRITPSDLHRLRRGWEIYLGSGLSPSLFFETHPPKPLGHDLKIYELTLERELLRQRITERTEQMLESGLIDEVCQLESRYTREPQAMKSIGIAETLAYLDGEISKEELTPLISTHTAQLAKRQTTFNKTQFTSIRHLEAPRLFEEICHTITKS.

8 to 15 (GASASGKS) is an ATP binding site. Residue 10-15 (SASGKS) participates in substrate binding. Residues 33–36 (DSLS) form an interaction with substrate tRNA region.

This sequence belongs to the IPP transferase family. In terms of assembly, monomer. Mg(2+) is required as a cofactor.

It carries out the reaction adenosine(37) in tRNA + dimethylallyl diphosphate = N(6)-dimethylallyladenosine(37) in tRNA + diphosphate. Functionally, catalyzes the transfer of a dimethylallyl group onto the adenine at position 37 in tRNAs that read codons beginning with uridine, leading to the formation of N6-(dimethylallyl)adenosine (i(6)A). The protein is tRNA dimethylallyltransferase of Wolinella succinogenes (strain ATCC 29543 / DSM 1740 / CCUG 13145 / JCM 31913 / LMG 7466 / NCTC 11488 / FDC 602W) (Vibrio succinogenes).